Here is a 346-residue protein sequence, read N- to C-terminus: Cytidine deaminase 5 (346 aa).

CMP/dCMP-type deaminase domains lie at 20–148 and 183–304; these read TDHK…FGSE and DLCS…ITGA. 58–60 provides a ligand contact to substrate; it reads NVE. H71 serves as a coordination point for Zn(2+). Catalysis depends on E73, which acts as the Proton donor. Residues C104 and C107 each contribute to the Zn(2+) site.

It belongs to the cytidine and deoxycytidylate deaminase family. Homodimer. The cofactor is Zn(2+).

The catalysed reaction is cytidine + H2O + H(+) = uridine + NH4(+). The enzyme catalyses 2'-deoxycytidine + H2O + H(+) = 2'-deoxyuridine + NH4(+). Functionally, this enzyme scavenges exogenous and endogenous cytidine and 2'-deoxycytidine for UMP synthesis. In Arabidopsis thaliana (Mouse-ear cress), this protein is Cytidine deaminase 5 (CDA5).